Reading from the N-terminus, the 322-residue chain is Cytochrome c biogenesis protein CcsA (322 aa).

Helical transmembrane passes span 9–29 (ILTH…LITL), 44–64 (GMIA…IYSG), 71–91 (LYES…VPYF), 98–118 (LTTI…SGLL), 143–163 (MILS…LLVI), 226–246 (VISL…VWAN), 253–273 (WSWD…AIYL), and 287–307 (AIVA…VNLL).

The protein belongs to the CcmF/CycK/Ccl1/NrfE/CcsA family. May interact with Ccs1.

The protein resides in the plastid. The protein localises to the chloroplast thylakoid membrane. Functionally, required during biogenesis of c-type cytochromes (cytochrome c6 and cytochrome f) at the step of heme attachment. This is Cytochrome c biogenesis protein CcsA from Guizotia abyssinica (Niger).